The primary structure comprises 116 residues: Large ribosomal subunit protein bL17 (116 aa).

This sequence belongs to the bacterial ribosomal protein bL17 family. In terms of assembly, part of the 50S ribosomal subunit. Contacts protein L32.

The polypeptide is Large ribosomal subunit protein bL17 (Synechococcus elongatus (strain ATCC 33912 / PCC 7942 / FACHB-805) (Anacystis nidulans R2)).